Consider the following 103-residue polypeptide: Cytochrome c55X (103 aa).

An N-terminal signal peptide occupies residues 1-17 (MARLALLLVLLAGTAVA). Heme c is bound by residues C36, C39, and H40.

In terms of processing, binds 1 heme c group covalently per subunit.

Its subcellular location is the periplasm. Functionally, monoheme c-type cytochrome. The protein is Cytochrome c55X (nirC) of Paracoccus denitrificans (strain Pd 1222).